The sequence spans 55 residues: Spermatid nuclear transition protein 1 (55 aa).

A compositionally biased stretch (basic residues) spans 1–42; it reads MSTSRKLKSHGMRRGKNRAPHKGVKRGGSKRKYRKGSLKSRK. The disordered stretch occupies residues 1-55; the sequence is MSTSRKLKSHGMRRGKNRAPHKGVKRGGSKRKYRKGSLKSRKRCDDANRNYRSHL. Phosphoserine occurs at positions 9, 37, and 40.

It belongs to the nuclear transition protein 1 family. In terms of tissue distribution, testis.

The protein resides in the nucleus. Its subcellular location is the chromosome. Functionally, plays a key role in the replacement of histones to protamine in the elongating spermatids of mammals. In condensing spermatids, loaded onto the nucleosomes, where it promotes the recruitment and processing of protamines, which are responsible for histone eviction. The sequence is that of Spermatid nuclear transition protein 1 (TNP1) from Sus scrofa (Pig).